Reading from the N-terminus, the 213-residue chain is Uridine kinase (213 aa).

Residue 14–21 participates in ATP binding; the sequence is GASASGKS.

This sequence belongs to the uridine kinase family.

Its subcellular location is the cytoplasm. The enzyme catalyses uridine + ATP = UMP + ADP + H(+). The catalysed reaction is cytidine + ATP = CMP + ADP + H(+). The protein operates within pyrimidine metabolism; CTP biosynthesis via salvage pathway; CTP from cytidine: step 1/3. It functions in the pathway pyrimidine metabolism; UMP biosynthesis via salvage pathway; UMP from uridine: step 1/1. The sequence is that of Uridine kinase from Vibrio parahaemolyticus serotype O3:K6 (strain RIMD 2210633).